Here is a 431-residue protein sequence, read N- to C-terminus: Glutamate-1-semialdehyde 2,1-aminomutase (431 aa).

Position 269 is an N6-(pyridoxal phosphate)lysine (lysine 269).

It belongs to the class-III pyridoxal-phosphate-dependent aminotransferase family. HemL subfamily. In terms of assembly, homodimer. Pyridoxal 5'-phosphate serves as cofactor.

Its subcellular location is the cytoplasm. It catalyses the reaction (S)-4-amino-5-oxopentanoate = 5-aminolevulinate. Its pathway is porphyrin-containing compound metabolism; protoporphyrin-IX biosynthesis; 5-aminolevulinate from L-glutamyl-tRNA(Glu): step 2/2. It participates in porphyrin-containing compound metabolism; chlorophyll biosynthesis. This chain is Glutamate-1-semialdehyde 2,1-aminomutase, found in Chlorobium phaeovibrioides (strain DSM 265 / 1930) (Prosthecochloris vibrioformis (strain DSM 265)).